We begin with the raw amino-acid sequence, 165 residues long: SsrA-binding protein (165 aa).

Positions 141–165 (KLHDKRENEKRKQSEREVKSALARY) are disordered. Residues 144–159 (DKRENEKRKQSEREVK) are compositionally biased toward basic and acidic residues.

This sequence belongs to the SmpB family.

It is found in the cytoplasm. Required for rescue of stalled ribosomes mediated by trans-translation. Binds to transfer-messenger RNA (tmRNA), required for stable association of tmRNA with ribosomes. tmRNA and SmpB together mimic tRNA shape, replacing the anticodon stem-loop with SmpB. tmRNA is encoded by the ssrA gene; the 2 termini fold to resemble tRNA(Ala) and it encodes a 'tag peptide', a short internal open reading frame. During trans-translation Ala-aminoacylated tmRNA acts like a tRNA, entering the A-site of stalled ribosomes, displacing the stalled mRNA. The ribosome then switches to translate the ORF on the tmRNA; the nascent peptide is terminated with the 'tag peptide' encoded by the tmRNA and targeted for degradation. The ribosome is freed to recommence translation, which seems to be the essential function of trans-translation. This is SsrA-binding protein from Prochlorococcus marinus (strain SARG / CCMP1375 / SS120).